We begin with the raw amino-acid sequence, 59 residues long: ATP synthase subunit J, mitochondrial (59 aa).

Residues 9–25 (ILKVYWPFFVAGAAVYY) form a helical membrane-spanning segment.

The protein belongs to the ATPase j subunit family. F-type ATPases have 2 components, CF(1) - the catalytic core - and CF(0) - the membrane proton channel. In yeast, the dimeric form of ATP synthase consists of 17 polypeptides: alpha, beta, gamma, delta, epsilon, 4 (B), 5 (OSCP), 6 (A), 8, 9 (C), d, E (Tim11), f, g, h, i/j and k.

The protein resides in the mitochondrion membrane. Its function is as follows. Mitochondrial membrane ATP synthase (F(1)F(0) ATP synthase or Complex V) produces ATP from ADP in the presence of a proton gradient across the membrane which is generated by electron transport complexes of the respiratory chain. F-type ATPases consist of two structural domains, F(1) - containing the extramembraneous catalytic core and F(0) - containing the membrane proton channel, linked together by a central stalk and a peripheral stalk. During catalysis, ATP synthesis in the catalytic domain of F(1) is coupled via a rotary mechanism of the central stalk subunits to proton translocation. Part of the complex F(0) domain. Minor subunit located with subunit a in the membrane. This chain is ATP synthase subunit J, mitochondrial (ATP18), found in Saccharomyces cerevisiae (strain ATCC 204508 / S288c) (Baker's yeast).